Reading from the N-terminus, the 287-residue chain is Elongation factor Ts (287 aa).

Residues T80 to L83 form an involved in Mg(2+) ion dislocation from EF-Tu region.

It belongs to the EF-Ts family.

It localises to the cytoplasm. Associates with the EF-Tu.GDP complex and induces the exchange of GDP to GTP. It remains bound to the aminoacyl-tRNA.EF-Tu.GTP complex up to the GTP hydrolysis stage on the ribosome. The polypeptide is Elongation factor Ts (Pseudomonas fluorescens (strain SBW25)).